Reading from the N-terminus, the 484-residue chain is Legumin type B (484 aa).

Residues 1–22 (MSKPFLSLLSLSLLLFTSTCLA) form the signal peptide. 2 disulfides stabilise this stretch: C33–C66 and C109–C310. Residues 38–257 (INALEPDHRV…TFNTEEDTAK (220 aa)) form the Cupin type-1 1 domain. Disordered regions lie at residues 109 to 141 (CPQT…RFRK), 196 to 236 (PETQ…GNSV), and 275 to 304 (GLRI…GRNG). Residues 117-129 (RSSQSRQGSRQQQ) are compositionally biased toward low complexity. Residues 284-293 (QQEEEEEEEE) are compositionally biased toward acidic residues. The Cupin type-1 2 domain maps to 316-463 (ENIAQPARAD…AFGLRQRQVT (148 aa)).

The protein belongs to the 11S seed storage protein (globulins) family. As to quaternary structure, hexamer; each subunit is composed of an acidic and a basic chain derived from a single precursor and linked by a disulfide bond.

Functionally, this protein found in the seeds of many leguminous and non-leguminous plants is the source of sulfur-containing amino acids in seed meals. The sequence is that of Legumin type B (LEB4) from Vicia faba (Broad bean).